The chain runs to 275 residues: MPVKKYNPTSPGTRFMTVSTFEEITKKEPEKSLLAPLKKTGGRNSYGRITVRHHGGGAKRKYRIIDFKRDKDGIKAKVAAIEYDPNRTAYIALLHYVDGEKRYIIAPHGLKVGDIVESGENADIKPGNALPLENIPVGTEIHNIELKPGKGGQLVRSAGNVAQLMAKEGNYAQIRLPSGEVRMVSLKCKATIGQVGNIDHENVSIGKAGRKRWMGIRPTVRGVVMNPVDHPHGGGEGKSPIGRPSPVTPWGKPTLGYKTRKKNKASDKFIIKRRK.

The segment at 224-275 (VMNPVDHPHGGGEGKSPIGRPSPVTPWGKPTLGYKTRKKNKASDKFIIKRRK) is disordered. Residues 264-275 (KASDKFIIKRRK) are compositionally biased toward basic and acidic residues.

Belongs to the universal ribosomal protein uL2 family. As to quaternary structure, part of the 50S ribosomal subunit. Forms a bridge to the 30S subunit in the 70S ribosome.

Functionally, one of the primary rRNA binding proteins. Required for association of the 30S and 50S subunits to form the 70S ribosome, for tRNA binding and peptide bond formation. It has been suggested to have peptidyltransferase activity; this is somewhat controversial. Makes several contacts with the 16S rRNA in the 70S ribosome. The polypeptide is Large ribosomal subunit protein uL2 (Acetivibrio thermocellus (strain ATCC 27405 / DSM 1237 / JCM 9322 / NBRC 103400 / NCIMB 10682 / NRRL B-4536 / VPI 7372) (Clostridium thermocellum)).